We begin with the raw amino-acid sequence, 302 residues long: tRNA dimethylallyltransferase (302 aa).

Glycine 9–serine 16 is an ATP binding site. Position 11 to 16 (threonine 11 to serine 16) interacts with substrate.

The protein belongs to the IPP transferase family. In terms of assembly, monomer. Requires Mg(2+) as cofactor.

It carries out the reaction adenosine(37) in tRNA + dimethylallyl diphosphate = N(6)-dimethylallyladenosine(37) in tRNA + diphosphate. Functionally, catalyzes the transfer of a dimethylallyl group onto the adenine at position 37 in tRNAs that read codons beginning with uridine, leading to the formation of N6-(dimethylallyl)adenosine (i(6)A). This Mycolicibacterium smegmatis (strain ATCC 700084 / mc(2)155) (Mycobacterium smegmatis) protein is tRNA dimethylallyltransferase.